The primary structure comprises 191 residues: 3-isopropylmalate dehydratase small subunit (191 aa).

Belongs to the LeuD family. LeuD type 1 subfamily. In terms of assembly, heterodimer of LeuC and LeuD.

It carries out the reaction (2R,3S)-3-isopropylmalate = (2S)-2-isopropylmalate. The protein operates within amino-acid biosynthesis; L-leucine biosynthesis; L-leucine from 3-methyl-2-oxobutanoate: step 2/4. Catalyzes the isomerization between 2-isopropylmalate and 3-isopropylmalate, via the formation of 2-isopropylmaleate. The polypeptide is 3-isopropylmalate dehydratase small subunit (Lactococcus lactis subsp. cremoris (strain MG1363)).